Reading from the N-terminus, the 421-residue chain is UPF0415 protein C7orf25 homolog (421 aa).

It belongs to the UPF0415 family.

The chain is UPF0415 protein C7orf25 homolog from Bos taurus (Bovine).